A 466-amino-acid polypeptide reads, in one-letter code: Ribulose bisphosphate carboxylase large chain (466 aa).

At Lys5 the chain carries N6,N6,N6-trimethyllysine. Substrate contacts are provided by Asn114 and Thr164. Lys166 functions as the Proton acceptor in the catalytic mechanism. Lys168 is a substrate binding site. Mg(2+) is bound by residues Lys192, Asp194, and Glu195. N6-carboxylysine is present on Lys192. The active-site Proton acceptor is His285. Arg286, His318, and Ser370 together coordinate substrate.

It belongs to the RuBisCO large chain family. Type I subfamily. As to quaternary structure, heterohexadecamer of 8 large chains and 8 small chains; disulfide-linked. The disulfide link is formed within the large subunit homodimers. Mg(2+) serves as cofactor. The disulfide bond which can form in the large chain dimeric partners within the hexadecamer appears to be associated with oxidative stress and protein turnover.

The protein resides in the plastid. Its subcellular location is the chloroplast. The catalysed reaction is 2 (2R)-3-phosphoglycerate + 2 H(+) = D-ribulose 1,5-bisphosphate + CO2 + H2O. It catalyses the reaction D-ribulose 1,5-bisphosphate + O2 = 2-phosphoglycolate + (2R)-3-phosphoglycerate + 2 H(+). In terms of biological role, ruBisCO catalyzes two reactions: the carboxylation of D-ribulose 1,5-bisphosphate, the primary event in carbon dioxide fixation, as well as the oxidative fragmentation of the pentose substrate in the photorespiration process. Both reactions occur simultaneously and in competition at the same active site. The protein is Ribulose bisphosphate carboxylase large chain of Gonopterodendron arboreum (Maracaibo lignum-vitae).